A 161-amino-acid chain; its full sequence is Pathogenesis-related protein 1 (161 aa).

Residues 1 to 26 form the signal peptide; the sequence is MNFTGYSRFLIVFVALVGALVLPSKA. The region spanning 34 to 149 is the SCP domain; the sequence is LRVHNQARGA…NGGTIISCNY (116 aa). Intrachain disulfides connect Cys-70-Cys-138, Cys-113-Cys-117, and Cys-133-Cys-147.

This sequence belongs to the CRISP family.

It is found in the secreted. Its subcellular location is the extracellular space. The protein localises to the apoplast. Partially responsible for acquired pathogen resistance. In Arabidopsis thaliana (Mouse-ear cress), this protein is Pathogenesis-related protein 1.